The following is a 187-amino-acid chain: ATP synthase subunit b (187 aa).

A helical membrane pass occupies residues Val31–Asn51.

The protein belongs to the ATPase B chain family. As to quaternary structure, F-type ATPases have 2 components, F(1) - the catalytic core - and F(0) - the membrane proton channel. F(1) has five subunits: alpha(3), beta(3), gamma(1), delta(1), epsilon(1). F(0) has three main subunits: a(1), b(2) and c(10-14). The alpha and beta chains form an alternating ring which encloses part of the gamma chain. F(1) is attached to F(0) by a central stalk formed by the gamma and epsilon chains, while a peripheral stalk is formed by the delta and b chains.

The protein localises to the cell membrane. Functionally, f(1)F(0) ATP synthase produces ATP from ADP in the presence of a proton or sodium gradient. F-type ATPases consist of two structural domains, F(1) containing the extramembraneous catalytic core and F(0) containing the membrane proton channel, linked together by a central stalk and a peripheral stalk. During catalysis, ATP synthesis in the catalytic domain of F(1) is coupled via a rotary mechanism of the central stalk subunits to proton translocation. In terms of biological role, component of the F(0) channel, it forms part of the peripheral stalk, linking F(1) to F(0). In Lachnoclostridium phytofermentans (strain ATCC 700394 / DSM 18823 / ISDg) (Clostridium phytofermentans), this protein is ATP synthase subunit b.